Consider the following 374-residue polypeptide: UPF0754 membrane protein SAS1767 (374 aa).

Helical transmembrane passes span 4 to 24 (LFII…TNVI) and 354 to 374 (SLGF…AIFV).

Belongs to the UPF0754 family.

Its subcellular location is the cell membrane. In Staphylococcus aureus (strain MSSA476), this protein is UPF0754 membrane protein SAS1767.